The chain runs to 178 residues: Thymidine kinase (178 aa).

ATP is bound at residue 13–20; the sequence is GPMFAGKS. Catalysis depends on Glu85, which acts as the Proton acceptor. Phe115 serves as a coordination point for substrate. Zn(2+) is bound by residues Cys140 and Cys143. 159–163 lines the substrate pocket; sequence IEIIG. Residues Cys172 and Cys175 each coordinate Zn(2+).

It belongs to the thymidine kinase family.

The catalysed reaction is thymidine + ATP = dTMP + ADP + H(+). In Myxoma virus (strain Uriarra) (MYXV), this protein is Thymidine kinase (TK).